Consider the following 251-residue polypeptide: Aspartate/glutamate leucyltransferase (251 aa).

The protein belongs to the R-transferase family. Bpt subfamily.

The protein resides in the cytoplasm. The enzyme catalyses N-terminal L-glutamyl-[protein] + L-leucyl-tRNA(Leu) = N-terminal L-leucyl-L-glutamyl-[protein] + tRNA(Leu) + H(+). It carries out the reaction N-terminal L-aspartyl-[protein] + L-leucyl-tRNA(Leu) = N-terminal L-leucyl-L-aspartyl-[protein] + tRNA(Leu) + H(+). Functions in the N-end rule pathway of protein degradation where it conjugates Leu from its aminoacyl-tRNA to the N-termini of proteins containing an N-terminal aspartate or glutamate. The sequence is that of Aspartate/glutamate leucyltransferase from Stenotrophomonas maltophilia (strain K279a).